A 97-amino-acid polypeptide reads, in one-letter code: UPF0729 protein GD16342 (97 aa).

Residues 64–97 (KPEKASVGPAEESQNPPLNAIAAETEVDESKKEI) are disordered. Ser-69 carries the phosphoserine modification.

Belongs to the UPF0729 family.

In Drosophila simulans (Fruit fly), this protein is UPF0729 protein GD16342.